The primary structure comprises 90 residues: Small ribosomal subunit protein bS20 (90 aa).

Basic residues predominate over residues 1 to 11; that stretch reads MAHHKSAKKRI. Residues 1 to 22 are disordered; it reads MAHHKSAKKRIRQTERRTEVNR. Over residues 12–22 the composition is skewed to basic and acidic residues; sequence RQTERRTEVNR.

It belongs to the bacterial ribosomal protein bS20 family.

Functionally, binds directly to 16S ribosomal RNA. The protein is Small ribosomal subunit protein bS20 of Paramagnetospirillum magneticum (strain ATCC 700264 / AMB-1) (Magnetospirillum magneticum).